The following is a 399-amino-acid chain: 5'-C-glycyluridine monooxygenase-decarboxylase (399 aa).

Position 179 (threonine 179) interacts with phosphate. Position 230 is an N6-(pyridoxal phosphate)lysine (lysine 230). Phosphate contacts are provided by arginine 318, arginine 322, arginine 353, and arginine 367.

The protein belongs to the SelA family. As to quaternary structure, homooctamer; tetramer of homodimers. Pyridoxal 5'-phosphate serves as cofactor.

It carries out the reaction (5'S,6'R)-C-glycyluridine + O2 = uridine-5'-carboxamide + CO2 + H2O. The protein operates within antibiotic biosynthesis. Activity is dependent on phosphate. Functionally, monooxygenase-decarboxylase involved in the biosynthesis of the capuramycin-type nucleoside antibiotic A-503083. Catalyzes the oxidative decarboxylation of 5'-C-glycyluridine (GlyU) to uridine-5'-carboxamide (CarU). Is stereospecific for the (5'S,6'R)-diastereomer of GlyU. Directly incorporates a single oxygen atom from O(2) into the product CarU. The sequence is that of 5'-C-glycyluridine monooxygenase-decarboxylase from Streptomyces sp.